The chain runs to 95 residues: Glutaredoxin 1 (95 aa).

Residues 1–95 (MNKSILHTII…DKLLEHQPKN (95 aa)) enclose the Glutaredoxin domain. C17 and C20 are oxidised to a cystine.

It belongs to the glutaredoxin family. As to quaternary structure, monomer.

The protein localises to the cytoplasm. Its function is as follows. Has a glutathione-disulfide oxidoreductase activity in the presence of NADPH and glutathione reductase. Reduces low molecular weight disulfides and proteins. In Rickettsia prowazekii (strain Madrid E), this protein is Glutaredoxin 1 (grxC1).